The primary structure comprises 158 residues: MGKVESFELDHTKVKAPYVRLITVEEGQKGDKISNFDLRLVQPNENAIPTGGLHTIEHLLAGLLRDRIDGYIDCSPFGCRTGFHLLVWGTPSTTDVAKALKESLEEIRDNITWEDVPGTTIESCGNYRDHSLFSAKQWSRDILEKGISDDPFERHVVE.

The Fe cation site is built by H54, H58, and C124.

Belongs to the LuxS family. As to quaternary structure, homodimer. Fe cation serves as cofactor.

It catalyses the reaction S-(5-deoxy-D-ribos-5-yl)-L-homocysteine = (S)-4,5-dihydroxypentane-2,3-dione + L-homocysteine. Functionally, involved in the synthesis of autoinducer 2 (AI-2) which is secreted by bacteria and is used to communicate both the cell density and the metabolic potential of the environment. The regulation of gene expression in response to changes in cell density is called quorum sensing. Catalyzes the transformation of S-ribosylhomocysteine (RHC) to homocysteine (HC) and 4,5-dihydroxy-2,3-pentadione (DPD). This is S-ribosylhomocysteine lyase from Lactobacillus johnsonii (strain CNCM I-12250 / La1 / NCC 533).